Reading from the N-terminus, the 951-residue chain is Glycine dehydrogenase (decarboxylating) 1 (951 aa).

Position 703 is an N6-(pyridoxal phosphate)lysine (K703).

Belongs to the GcvP family. As to quaternary structure, the glycine cleavage system is composed of four proteins: P, T, L and H. Pyridoxal 5'-phosphate is required as a cofactor.

It carries out the reaction N(6)-[(R)-lipoyl]-L-lysyl-[glycine-cleavage complex H protein] + glycine + H(+) = N(6)-[(R)-S(8)-aminomethyldihydrolipoyl]-L-lysyl-[glycine-cleavage complex H protein] + CO2. Its function is as follows. The glycine cleavage system catalyzes the degradation of glycine. The P protein binds the alpha-amino group of glycine through its pyridoxal phosphate cofactor; CO(2) is released and the remaining methylamine moiety is then transferred to the lipoamide cofactor of the H protein. The sequence is that of Glycine dehydrogenase (decarboxylating) 1 from Pseudomonas fluorescens (strain ATCC BAA-477 / NRRL B-23932 / Pf-5).